We begin with the raw amino-acid sequence, 407 residues long: L-cysteine:1D-myo-inositol 2-amino-2-deoxy-alpha-D-glucopyranoside ligase (407 aa).

A disordered region spans residues 1 to 22 (MRSWSAPDIVPLPGTGGPLRVH). Cysteine 43 contacts Zn(2+). Residues 43 to 46 (CGIT), threonine 58, and 81 to 83 (NTT) contribute to the L-cysteinyl-5'-AMP site. The 'HIGH' region signature appears at 45–55 (ITPYDAAHLGH). Positions 183 to 188 (ERGGDP) match the 'ERGGDP' region motif. Tryptophan 223 provides a ligand contact to L-cysteinyl-5'-AMP. Cysteine 227 contributes to the Zn(2+) binding site. An L-cysteinyl-5'-AMP-binding site is contributed by 245–247 (GSD). Histidine 252 is a Zn(2+) binding site. Residue valine 278 coordinates L-cysteinyl-5'-AMP. The 'KMSKS' region signature appears at 284-288 (KMSKS).

The protein belongs to the class-I aminoacyl-tRNA synthetase family. MshC subfamily. Monomer. Zn(2+) serves as cofactor.

It carries out the reaction 1D-myo-inositol 2-amino-2-deoxy-alpha-D-glucopyranoside + L-cysteine + ATP = 1D-myo-inositol 2-(L-cysteinylamino)-2-deoxy-alpha-D-glucopyranoside + AMP + diphosphate + H(+). Its function is as follows. Catalyzes the ATP-dependent condensation of GlcN-Ins and L-cysteine to form L-Cys-GlcN-Ins. This is L-cysteine:1D-myo-inositol 2-amino-2-deoxy-alpha-D-glucopyranoside ligase from Nocardiopsis dassonvillei (strain ATCC 23218 / DSM 43111 / CIP 107115 / JCM 7437 / KCTC 9190 / NBRC 14626 / NCTC 10488 / NRRL B-5397 / IMRU 509) (Actinomadura dassonvillei).